The chain runs to 197 residues: Large ribosomal subunit protein bL25 (197 aa).

The protein belongs to the bacterial ribosomal protein bL25 family. CTC subfamily. Part of the 50S ribosomal subunit; part of the 5S rRNA/L5/L18/L25 subcomplex. Contacts the 5S rRNA. Binds to the 5S rRNA independently of L5 and L18.

Functionally, this is one of the proteins that binds to the 5S RNA in the ribosome where it forms part of the central protuberance. The polypeptide is Large ribosomal subunit protein bL25 (Citrifermentans bemidjiense (strain ATCC BAA-1014 / DSM 16622 / JCM 12645 / Bem) (Geobacter bemidjiensis)).